Reading from the N-terminus, the 851-residue chain is MTARNSASIPTSIRKTSENEVSGDETPAGVGNLSTKTASKTSLTFRQSSSDESTSSYSGNHHNINIQHHPNRPFRTNSSSFSPNDYSISESPSKSKKDGVHVSAVQLDNETDSEVESEVEELERELEAIEDSVYPEVRAAVNPTDDVNLPVNTWRTWVLTTIFVIVFAAVNQFFSLRYPALSISFIVAQLILFPLGKLLNLLPNWKIGYGRFSFYLNSSPFNVKEHAAITIAVSLTSSTAYATNILSAQTSFYKQNLSWGYKILIVLTSQMLGYGFAGLTRRWIVYPAAMIWPQTLVSTVLFRTLHGNSGNDIGVLKNNRISANGWTISRYRFFAYVMIGSFVFYWFPGFIFKGLSYFTVLCWIWPKNRVVNQLFGYNSGLGILPLTFDWQQVVYNSNPLASPWWVICNTFGSVVLIFWIVVPILYYKGVWFSNYLPMLSSSTFDHTGVSYNSSRVLNSDYSFNHTKYESYSPLYMPMSYSMSTALNFAAVTAIFTHCALYNGKDIWQRLWKESGKDECIHRKLMRNYKEAPQWWYATLFIVVFGLTIFTVRYYDTQCPVWALIVALLIFIVNFIPQGVLEGITNQHVGLNIITELIGGYILPGKPLANLMIKLYGFIPMRQGLEFSRDLKLAQYMKIPPRILFFVQLFATILGGITQVAVQEWMNYHIPGICTTSQSNGFTCPNGRSIYNASLIWGAIGPAKMFSKGKPYYPLIFFFLIGAVAPFITWGLRKRFPKSWIGKLNAPVLFTGPGNIPPATGINYSSWAIVGFIFNYVIRKRAIHWWRKYNYVLAAAMDSGVAVAGVVIFLCVSYPGGKITWWGNTVYTKTYDWKSVPYRSLGPNETFGYTNW.

Over residues 1-14 (MTARNSASIPTSIR) the composition is skewed to polar residues. The disordered stretch occupies residues 1–116 (MTARNSASIP…LDNETDSEVE (116 aa)). N-linked (GlcNAc...) asparagine glycosylation is present at asparagine 32. Positions 33–68 (LSTKTASKTSLTFRQSSSDESTSSYSGNHHNINIQH) are enriched in low complexity. A compositionally biased stretch (polar residues) spans 74-92 (FRTNSSSFSPNDYSISESP). An N-linked (GlcNAc...) asparagine glycan is attached at asparagine 77. A Phosphoserine modification is found at serine 93. Positions 105–134 (VQLDNETDSEVESEVEELERELEAIEDSVY) form a coiled coil. Asparagine 109 carries N-linked (GlcNAc...) asparagine glycosylation. The next 2 helical transmembrane spans lie at 156–176 (TWVLTTIFVIVFAAVNQFFSL) and 179–199 (PALSISFIVAQLILFPLGKLL). Asparagine 256 carries N-linked (GlcNAc...) asparagine glycosylation. 4 consecutive transmembrane segments (helical) span residues 259-279 (WGYKILIVLTSQMLGYGFAGL), 282-302 (RWIVYPAAMIWPQTLVSTVLF), 333-353 (FFAYVMIGSFVFYWFPGFIFK), and 405-425 (WVICNTFGSVVLIFWIVVPIL). N-linked (GlcNAc...) asparagine glycosylation is found at asparagine 452 and asparagine 464. 5 consecutive transmembrane segments (helical) span residues 480 to 500 (YSMSTALNFAAVTAIFTHCAL), 531 to 551 (APQWWYATLFIVVFGLTIFTV), 560 to 580 (VWALIVALLIFIVNFIPQGVL), 592 to 612 (IITELIGGYILPGKPLANLMI), and 642 to 662 (ILFFVQLFATILGGITQVAVQ). The N-linked (GlcNAc...) asparagine glycan is linked to asparagine 691. Transmembrane regions (helical) follow at residues 711-731 (YYPLIFFFLIGAVAPFITWGL), 757-777 (PATGINYSSWAIVGFIFNYVI), and 791-811 (VLAAAMDSGVAVAGVVIFLCV). A glycan (N-linked (GlcNAc...) asparagine) is linked at asparagine 843.

The protein belongs to the oligopeptide OPT transporter family.

The protein localises to the endoplasmic reticulum membrane. It localises to the cell membrane. High-affinity glutathione transporter which plays a role in scavenging glutathione from the extracellular environment for the maintenance of sulfur homeostasis. This is Glutathione transporter 1 (pgt1) from Schizosaccharomyces pombe (strain 972 / ATCC 24843) (Fission yeast).